A 282-amino-acid chain; its full sequence is uncharacterized protein (282 aa).

The HTH rpiR-type domain maps to 2 to 78 (TDVLAVIREM…IKIAVSLAKQ (77 aa)). A DNA-binding region (H-T-H motif) is located at residues 38-57 (VNELANACDTSEASIIRFCR). Positions 122–262 (AAEALANANK…FILVAQKKYN (141 aa)) constitute an SIS domain.

This is an uncharacterized protein from Caldanaerobacter subterraneus subsp. tengcongensis (strain DSM 15242 / JCM 11007 / NBRC 100824 / MB4) (Thermoanaerobacter tengcongensis).